The primary structure comprises 172 residues: FMN reductase (NADH) RutF 2 (172 aa).

It belongs to the non-flavoprotein flavin reductase family. RutF subfamily.

The enzyme catalyses FMNH2 + NAD(+) = FMN + NADH + 2 H(+). Its function is as follows. Catalyzes the reduction of FMN to FMNH2 which is used to reduce pyrimidine by RutA via the Rut pathway. The polypeptide is FMN reductase (NADH) RutF 2 (Methylorubrum extorquens (strain PA1) (Methylobacterium extorquens)).